The chain runs to 399 residues: Elongation factor Tu (399 aa).

A tr-type G domain is found at 10–209 (KPHVNIGTIG…AVDDYIPTPA (200 aa)). Positions 19–26 (GHVDHGKT) are G1. Residue 19-26 (GHVDHGKT) participates in GTP binding. Thr26 is a binding site for Mg(2+). Residues 60-64 (GITIA) form a G2 region. The tract at residues 81 to 84 (DCPG) is G3. GTP contacts are provided by residues 81 to 85 (DCPGH) and 136 to 139 (NKAD). The tract at residues 136–139 (NKAD) is G4. The tract at residues 174–176 (SAL) is G5.

It belongs to the TRAFAC class translation factor GTPase superfamily. Classic translation factor GTPase family. EF-Tu/EF-1A subfamily. Monomer.

The protein resides in the cytoplasm. The enzyme catalyses GTP + H2O = GDP + phosphate + H(+). GTP hydrolase that promotes the GTP-dependent binding of aminoacyl-tRNA to the A-site of ribosomes during protein biosynthesis. This is Elongation factor Tu from Campylobacter lari (strain RM2100 / D67 / ATCC BAA-1060).